The following is a 417-amino-acid chain: UPF0761 membrane protein CV_0810 (417 aa).

7 helical membrane passes run 52–72, 79–99, 110–130, 150–170, 185–205, 214–234, and 258–278; these read LLALVPLFTIALSVISAFPVF, FKIMLLSTLVPEFAGKVITVY, LTAAGIVMLGVTALMLMSTIE, MVYWTVLTLGPLVLGGSLLSW, LLASVLEAGGTIVLTALVLAL, FVPFRHAVWGALVTSVLLELT, and IPIFLLWVYCLWLVVLAGAVF.

The protein belongs to the UPF0761 family.

Its subcellular location is the cell inner membrane. This is UPF0761 membrane protein CV_0810 from Chromobacterium violaceum (strain ATCC 12472 / DSM 30191 / JCM 1249 / CCUG 213 / NBRC 12614 / NCIMB 9131 / NCTC 9757 / MK).